The chain runs to 424 residues: UPF0597 protein Shewmr7_2876 (424 aa).

It belongs to the UPF0597 family.

The chain is UPF0597 protein Shewmr7_2876 from Shewanella sp. (strain MR-7).